The following is a 768-amino-acid chain: Photosystem I P700 chlorophyll a apoprotein A1 (768 aa).

8 consecutive transmembrane segments (helical) span residues 76-99 (VFSA…FHGA), 162-185 (LMAL…YHYH), 201-225 (LNHH…HIGA), 310-328 (ISHH…GHLY), 369-392 (WHAQ…HHMY), 408-434 (LGLF…IAMI), 456-478 (ALIS…LYIH), and 559-577 (FMIH…LILL). [4Fe-4S] cluster-binding residues include C601 and C610. The next 2 helical transmembrane spans lie at 617-638 (HVFL…HFSW) and 682-704 (ISMY…MFLF). H693 contacts divinylchlorophyll a'. Divinyl chlorophyll a is bound by residues M701 and Y709. Residue W710 coordinates phylloquinone. The chain crosses the membrane as a helical span at residues 742-762 (AVGAAHFLLGGIATTWAFFHA).

It belongs to the PsaA/PsaB family. The PsaA/B heterodimer binds the P700 divinyl chlorophyll special pair and subsequent electron acceptors. PSI consists of a core antenna complex that captures photons, and an electron transfer chain that converts photonic excitation into a charge separation. The cyanobacterial PSI reaction center is composed of one copy each of PsaA,B,C,D,E,F,I,J,K,L,M and X, and forms trimeric complexes. The cofactor is PSI electron transfer chain: 5 divinyl chlorophyll a, 1 divinyl chlorophyll a', 2 phylloquinones and 3 4Fe-4S clusters. PSI core antenna: 90 divinyl chlorophyll a, 22 carotenoids, 3 phospholipids and 1 galactolipid. P700 is a divinyl chlorophyll a/divinyl chlorophyll a' dimer, A0 is one or more divinyl chlorophyll a, A1 is one or both phylloquinones and FX is a shared 4Fe-4S iron-sulfur center..

It localises to the cellular thylakoid membrane. The enzyme catalyses reduced [plastocyanin] + hnu + oxidized [2Fe-2S]-[ferredoxin] = oxidized [plastocyanin] + reduced [2Fe-2S]-[ferredoxin]. Its function is as follows. PsaA and PsaB bind P700, the primary electron donor of photosystem I (PSI), as well as the electron acceptors A0, A1 and FX. PSI is a plastocyanin/cytochrome c6-ferredoxin oxidoreductase, converting photonic excitation into a charge separation, which transfers an electron from the donor P700 chlorophyll pair to the spectroscopically characterized acceptors A0, A1, FX, FA and FB in turn. Oxidized P700 is reduced on the lumenal side of the thylakoid membrane by plastocyanin or cytochrome c6. The chain is Photosystem I P700 chlorophyll a apoprotein A1 from Prochlorococcus marinus (strain NATL2A).